The following is a 413-amino-acid chain: uncharacterized protein (413 aa).

Disordered stretches follow at residues 108 to 158 and 232 to 257; these read ESVP…SKIS and DRLG…RLGA. At Ser-115 the chain carries Phosphoserine. Residues 127–139 are compositionally biased toward polar residues; that stretch reads SAASRMIANSLNH. A Phosphoserine modification is found at Ser-141. Lys-239 is covalently cross-linked (Glycyl lysine isopeptide (Lys-Gly) (interchain with G-Cter in SUMO2)). Phosphoserine is present on residues Ser-269 and Ser-296. The disordered stretch occupies residues 290 to 336; the sequence is RGPTKASAQPALTVKAKAASSATSTATTPKLRRLALPSRPGLQKKPD. Residues 302–318 are compositionally biased toward low complexity; sequence TVKAKAASSATSTATTP. Ser-342 carries the phosphoserine modification.

This is an uncharacterized protein from Mus musculus (Mouse).